Here is a 287-residue protein sequence, read N- to C-terminus: Hydroxysteroid 11-beta-dehydrogenase 1-like protein (287 aa).

Positions 1 to 20 (MMKPFGKVLCAAGSLAVLLA) are cleaved as a signal peptide. NADP(+) is bound by residues 41–67 (GASAGIGEQMAYHYATFGAEIVLTARR), 92–93 (DM), and 119–121 (NHI). Ser-170 serves as a coordination point for substrate. Catalysis depends on Tyr-183, which acts as the Proton acceptor. Residues 183 to 187 (YSATK) and 216 to 222 (GLIDTDA) each bind NADP(+).

Belongs to the short-chain dehydrogenases/reductases (SDR) family.

It is found in the secreted. It carries out the reaction cortisone + NADPH + H(+) = cortisol + NADP(+). Its function is as follows. Unidirectional NADP(+)-dependent cortisol dehydrogenase (in vitro). In Gallus gallus (Chicken), this protein is Hydroxysteroid 11-beta-dehydrogenase 1-like protein (HSD11B1L).